Consider the following 132-residue polypeptide: Pro-MCH 1 (132 aa).

The N-terminal stretch at 1 to 24 (MRDSVLSVIFALALFLECYTPSMA) is a signal peptide. A disulfide bond links cysteine 120 and cysteine 129.

This sequence belongs to the MCH family. As to expression, pituitary gland. Produced in neurons of lateral basal hypothalamus which project both to the brain and to the neural lobe of the pituitary gland from where MCH is released.

Plays a role in skin pigmentation by antagonizing the action of melanotropin alpha. Induces melanin concentration within the melanophores. May participate in the control of the hypothalamo-pituitary adrenal gland axis by inhibiting the release of ACTH. This chain is Pro-MCH 1 (mch1), found in Oncorhynchus kisutch (Coho salmon).